A 464-amino-acid chain; its full sequence is MTTRHYDVVVLGTGPAGEGAAMSAAKAGKRVAVIEASSQVGGSCTHLGTIPSKALRHAVKEIIAFNTNPMFRDIGEPRWFSFPKVLDRANRVIDKQVMGRTEYYARNRIDIYFGRGKFKDANTIEVNTYEKGPELLEAKKVVIATGSRPYRPANIDFSHPRIYCSDTILSLSHTPRSLIIYGAGVIGCEYASIFCGLGVRVELINPAKKLLSFLDDEITDALSYHLRDGGVLIRHNETYDSVETTERGVVMHMASGKKLRADALLFCNGRSGNTDNLGLESINLEVNSRGQLAVNDTYQTQVENVYAAGDVIGWPSLASAAYDQGRAAAANMFGAPGGEFISEVPTGIYTIPEISSVGKTEAELTAEKVPYEVGRAFFKNTARAQITGEAVGMLKILFHRESLELLGIHCFGDQASEIVHIGQAIMKQPGKQNTLKYFLNTTFNYPTMAEAYRVAALNGFNRVF.

An FAD-binding site is contributed by 35–44 (EASSQVGGSC).

Belongs to the class-I pyridine nucleotide-disulfide oxidoreductase family. FAD serves as cofactor.

It is found in the cytoplasm. The enzyme catalyses NAD(+) + NADPH = NADH + NADP(+). Functionally, conversion of NADPH, generated by peripheral catabolic pathways, to NADH, which can enter the respiratory chain for energy generation. This chain is Soluble pyridine nucleotide transhydrogenase, found in Marinomonas sp. (strain MWYL1).